A 428-amino-acid chain; its full sequence is Glutamate-1-semialdehyde 2,1-aminomutase (428 aa).

An N6-(pyridoxal phosphate)lysine modification is found at Lys265.

This sequence belongs to the class-III pyridoxal-phosphate-dependent aminotransferase family. HemL subfamily. Homodimer. Requires pyridoxal 5'-phosphate as cofactor.

The protein localises to the cytoplasm. It carries out the reaction (S)-4-amino-5-oxopentanoate = 5-aminolevulinate. Its pathway is porphyrin-containing compound metabolism; protoporphyrin-IX biosynthesis; 5-aminolevulinate from L-glutamyl-tRNA(Glu): step 2/2. This chain is Glutamate-1-semialdehyde 2,1-aminomutase, found in Hamiltonella defensa subsp. Acyrthosiphon pisum (strain 5AT).